We begin with the raw amino-acid sequence, 650 residues long: Putative pumilio homolog 7, chloroplastic (650 aa).

Disordered stretches follow at residues Met1 to Leu22 and Asn200 to Ile235. A chloroplast-targeting transit peptide spans Met1–Lys77. Low complexity-rich tracts occupy residues Ser8–Leu22 and Pro217–Gly232. A PUM-HD domain is found at Ser308–Lys650. Pumilio repeat units lie at residues Asp333 to Asn368, Glu369 to Leu404, Glu408 to Lys443, Ala445 to Asp480, Ala481 to Ala516, Glu517 to Ala552, Gln553 to Ser591, and His594 to Glu625.

Its subcellular location is the plastid. The protein localises to the chloroplast. The protein resides in the cytoplasm. Sequence-specific RNA-binding protein that regulates translation and mRNA stability by binding the 3'-UTR of target mRNAs. The chain is Putative pumilio homolog 7, chloroplastic (APUM7) from Arabidopsis thaliana (Mouse-ear cress).